The following is a 438-amino-acid chain: MRSVISRIDLRGNPADPRASLPRAEIDVASAVEKVRPICEDVRHRGVEALIELGERFDGVRPAHIRVPADALETALAGLDRTVRAALEEAIRRARIVHRDQRRTDTTTRVVPGGTVTERWVPVDRVGLYVPGGRAVYPSSVVMNVVPAQEAGVPSLAVASPPQAEFGGLPHPTILAACALLGVDEVYAVGGAQAIAMFAYGAGECAPVSMVTGPGNIWVAAAKRLLKGIIGIDSEAGPTEIAILADDTANPAYVAADLISQAEHDVVAASVLVTPSTALADRVEAELARQVPAAKHRERITQALGGPQSGIVLVDDIDHGLDVVNAYAPEHLEVMTADAQSVAARVRNAGAIFIGDHSPVSLGDYCAGSNHVLPTGGVAVHSSGLSVQSFLRGIHVVEYDRAALAEVAHHVVALAEAEDLPAHGAAVTARIPREEQQA.

Positions 129, 193, and 216 each coordinate NAD(+). Residues threonine 239, glutamine 261, and histidine 264 each coordinate substrate. The Zn(2+) site is built by glutamine 261 and histidine 264. Active-site proton acceptor residues include glutamate 330 and histidine 331. Substrate is bound by residues histidine 331, aspartate 364, glutamate 418, and histidine 423. Aspartate 364 is a binding site for Zn(2+). Histidine 423 contacts Zn(2+).

It belongs to the histidinol dehydrogenase family. The cofactor is Zn(2+).

It catalyses the reaction L-histidinol + 2 NAD(+) + H2O = L-histidine + 2 NADH + 3 H(+). It functions in the pathway amino-acid biosynthesis; L-histidine biosynthesis; L-histidine from 5-phospho-alpha-D-ribose 1-diphosphate: step 9/9. In terms of biological role, catalyzes the sequential NAD-dependent oxidations of L-histidinol to L-histidinaldehyde and then to L-histidine. The polypeptide is Histidinol dehydrogenase (Thermobifida fusca (strain YX)).